Reading from the N-terminus, the 256-residue chain is Small ribosomal subunit protein eS1 (256 aa).

The residue at position 2 (Ala2) is an N-acetylalanine; partial.

The protein belongs to the eukaryotic ribosomal protein eS1 family. As to quaternary structure, component of the small ribosomal subunit. Mature ribosomes consist of a small (40S) and a large (60S) subunit. The 40S subunit contains about 33 different proteins and 1 molecule of RNA (18S). The 60S subunit contains about 49 different proteins and 3 molecules of RNA (25S, 5.8S and 5S).

The protein localises to the cytoplasm. This is Small ribosomal subunit protein eS1 (rps1) from Botryotinia fuckeliana (strain B05.10) (Noble rot fungus).